The following is a 178-amino-acid chain: MTTILSVRVQGKVVIGGDGQATFGHTVMKSNVKKVRSIYKNQVIAGFAGGTADAFTLFELFEKKLEKYQGQLQRSAIELAKDWRTDRLLRKLEALLAVADKKNSLIITGTGDVIQPENDIIAIGSGGPYAQAAAYAYALVYNTNLKASNIVKKSLQIASNICIYTNQSFTIKEIKSEK.

The active site involves T2. Na(+)-binding residues include S159, C162, and T165.

Belongs to the peptidase T1B family. HslV subfamily. A double ring-shaped homohexamer of HslV is capped on each side by a ring-shaped HslU homohexamer. The assembly of the HslU/HslV complex is dependent on binding of ATP.

It is found in the cytoplasm. It catalyses the reaction ATP-dependent cleavage of peptide bonds with broad specificity.. With respect to regulation, allosterically activated by HslU binding. Functionally, protease subunit of a proteasome-like degradation complex believed to be a general protein degrading machinery. The chain is ATP-dependent protease subunit HslV from Buchnera aphidicola subsp. Cinara cedri (strain Cc).